A 279-amino-acid polypeptide reads, in one-letter code: MAASQTFPLGPTHEPASALMEPLPCTRSLAEGFLEEELRLNAELSQLQFPEPVGVIYNPVDYAWEPHRNYVTRYCQGPKEVLFLGMNPGPFGMAQTGVPFGEVNVVRDWLGVGGPVLTPPQEHPKRPVLGLECPQSEVSGARFWGFFRTLCGQPQVFFRHCFVHNLCPLLFLAPSGRNLTPAELPAKQREQLLSICDAALCRQVQLLGVRLVVGVGRLAEQRARRALAGLTPEVQVEGLLHPSPRSAQANKGWEAAARERLQELGLLPLLTDEGSARPT.

Residues methionine 86, phenylalanine 100, and asparagine 165 each coordinate substrate. The tract at residues 175 to 189 (SGRNLTPAELPAKQR) is DNA-binding. Residue histidine 241 coordinates substrate.

The protein belongs to the uracil-DNA glycosylase (UDG) superfamily. SMUG1 family.

The protein localises to the nucleus. Its function is as follows. Recognizes base lesions in the genome and initiates base excision DNA repair. Acts as a monofunctional DNA glycosylase specific for uracil (U) residues in DNA with a preference for single-stranded DNA substrates. The activity is greater toward mismatches (U/G) compared to matches (U/A). Excises uracil (U), 5-formyluracil (fU) and uracil derivatives bearing an oxidized group at C5 [5-hydroxyuracil (hoU) and 5-hydroxymethyluracil (hmU)] in ssDNA and dsDNA, but not analogous cytosine derivatives (5-hydroxycytosine and 5-formylcytosine), nor other oxidized bases. The activity is damage-specific and salt-dependent. The substrate preference is the following: ssDNA &gt; dsDNA (G pair) = dsDNA (A pair) at low salt concentration, and dsDNA (G pair) &gt; dsDNA (A pair) &gt; ssDNA at high salt concentration. The protein is Single-strand selective monofunctional uracil DNA glycosylase (Smug1) of Mus musculus (Mouse).